A 293-amino-acid polypeptide reads, in one-letter code: MLGAETSLQALTSATRTGPAAFSTKSKAGKNTVPRTVAGAIAEYKRQHCAAMGIGIGPRLLSECPFAVTFDRYSPDSSAALERVIVAAYRQVLGNLPPTDNQRETSLEVRLMNGEITVRDFVNGLAKSDFYKDNFFHAVGAQRGIELNFKHLLGRAPLNQQEVQNHIKLQAEEGFDALIDTLTDSAEYTEVFGADIVPYDRTKDSYAGMNTRSFNLMRDLGGMKVAISDNAQGRQSKTVNALASASRESTKPQPFSYVSVTQIPVKLPQQQYTGHNVPAMSDYVPFRPFGIFF.

Cys-49 is a binding site for phycourobilin. The 180-residue stretch at 50-229 (AAMGIGIGPR…LGGMKVAISD (180 aa)) folds into the PBS-linker domain.

In terms of processing, contains one covalently linked phycourobilin chromophore.

The protein localises to the cellular thylakoid membrane. Its function is as follows. This protein is a bile pigment-bearing rod linker polypeptide that associates with C-phycoerythrin. The chain is Phycoerythrin class 2 subunit gamma, linker polypeptide (mpeC) from Synechococcus sp. (strain WH8020).